The chain runs to 793 residues: Serine/threonine-protein phosphatase BSU1 (793 aa).

5 Kelch repeats span residues 53 to 109, 110 to 160, 214 to 262, 264 to 314, and 329 to 388; these read STTA…LYGT, LILI…IAAQ, IFLL…VFGG, KLHV…NQYQ, and HLYV…EASS. A phosphoserine mark is found at S395 and S444. Residues D510, H512, D544, and N576 each coordinate Mn(2+). The active-site Proton donor is H577. Mn(2+) contacts are provided by H629 and H707. The residue at position 764 (S764) is a Phosphoserine.

This sequence belongs to the PPP phosphatase family. BSU subfamily. In terms of assembly, interacts with CDG1, CDL1 and ASK7/BIN2. The cofactor is Mn(2+). Phosphorylated at Ser-395 and Ser-444. Phosphorylated at Ser-764 by CDG1 and CDL1. Mainly expressed in young, elongating tissues. In young seedlings, it is expressed at the base of the hypocotyl, at the tip and most peripheral cell layers of cotyledons, and in the vascular cylinder of roots, particularly in the elongation zone and at the point of emergence of lateral roots. In mature plants, it is still present in the root vasculature, but almost completely absent in fully expanded stems and leaves. In flowers, it is mainly expressed in sepal veins, anther filaments, and in the style, suggesting that BSU1 is expressed in actively growing regions and apparently enriched in vascular tissues.

The protein localises to the nucleus. It carries out the reaction O-phospho-L-seryl-[protein] + H2O = L-seryl-[protein] + phosphate. The catalysed reaction is O-phospho-L-threonyl-[protein] + H2O = L-threonyl-[protein] + phosphate. Activated by phosphorylation at Ser-764 by CDG1. Phosphatase that acts as a positive regulator of brassinosteroid (BR) signaling. Dephosphorylates BES1, a transcription factor that regulates the expression of BR-response genes, thereby playing an important role in the regulation of response to BRs. Inactivates the negative regulator of BR signaling ASK7/BIN2 by dephosphorylation at 'Tyr-200'. The chain is Serine/threonine-protein phosphatase BSU1 (BSU1) from Arabidopsis thaliana (Mouse-ear cress).